The chain runs to 181 residues: Peptidyl-tRNA hydrolase (181 aa).

Tyr-14 is a binding site for tRNA. His-19 serves as the catalytic Proton acceptor. Residues Tyr-62, Asn-64, and Asn-108 each contribute to the tRNA site.

It belongs to the PTH family. Monomer.

It is found in the cytoplasm. It carries out the reaction an N-acyl-L-alpha-aminoacyl-tRNA + H2O = an N-acyl-L-amino acid + a tRNA + H(+). Functionally, hydrolyzes ribosome-free peptidyl-tRNAs (with 1 or more amino acids incorporated), which drop off the ribosome during protein synthesis, or as a result of ribosome stalling. Its function is as follows. Catalyzes the release of premature peptidyl moieties from peptidyl-tRNA molecules trapped in stalled 50S ribosomal subunits, and thus maintains levels of free tRNAs and 50S ribosomes. The sequence is that of Peptidyl-tRNA hydrolase from Campylobacter jejuni subsp. jejuni serotype O:2 (strain ATCC 700819 / NCTC 11168).